A 424-amino-acid polypeptide reads, in one-letter code: MGPSCLLFLCLLLCGGPELCYPQTQWLLPGGTPTPAGSSSPVEVECKEAELVVTVRRDLFGTGKLVQPGDLTLGSEGCQPLVAVDTDVVRLNAQLHECSSGVQVTEDALVYNTFLLHDPRPVNGLSILRTNRVEVPIECRYPRQGNVSSHPIQPTWVPFSATVSSEEKLAFSLRLMEEDWNTEKSSPTFHLGEVAHLQAEVQTGSHLPLQLFVDHCVATPSPLPGQNSSPHHFIVDSHGCLVDGLSESFSAFQVPRPRPETLQFTVDVFHFANSSRNTVYITCHLKVAPANQIPDKLNKACSFNKTSQSWLPVEGDADICDCCSNGNCSNSSSSEFETHEPAQWSTLVSRNRRHVTDEADVTVGPLIFLGKANDQAVEGWTSSAQTSVALGLGLATVAFLTLAAIVLGVTRKCHTSSYLVSLPQ.

The first 22 residues, methionine 1–proline 22, serve as a signal peptide directing secretion. The residue at position 23 (glutamine 23) is a Pyrrolidone carboxylic acid. The Extracellular segment spans residues glutamine 23 to serine 387. Residues threonine 32 and threonine 34 are each glycosylated (O-linked (GalNAc...) threonine). Serine 39 is a glycosylation site (O-linked (GalNAc...) serine). Residues glutamate 45–glutamine 308 form the ZP domain. Cystine bridges form between cysteine 46-cysteine 139 and cysteine 78-cysteine 98. Asparagine 146 carries an N-linked (GlcNAc...) asparagine glycan. Residues threonine 155 and threonine 162 are each glycosylated (O-linked (GalNAc...) threonine). Disulfide bonds link cysteine 216/cysteine 283 and cysteine 240/cysteine 301. N-linked (GlcNAc...) asparagine glycans are attached at residues asparagine 273, asparagine 304, asparagine 327, and asparagine 330. A propeptide spans arginine 352–glutamine 424 (removed in mature form). Residues valine 388–glycine 408 form a helical membrane-spanning segment. Over valine 409–glutamine 424 the chain is Cytoplasmic.

The protein belongs to the ZP domain family. ZPC subfamily. Polymers of ZP2 and ZP3 organized into long filaments cross-linked by ZP1 homodimers. Interacts with ZP1 and ZP2. Proteolytically cleaved before the transmembrane segment to yield the secreted ectodomain incorporated in the zona pellucida. In terms of processing, N-glycosylated; N-linked glycans are of high mannose/hybrid type, as well as bi-, tri- and tetra-antennary complex types. Post-translationally, O-glycosylated; removal of O-linked glycans may play an important role in the post-fertilization block to polyspermy. As to expression, expressed in oocytes.

The protein localises to the zona pellucida. It is found in the cell membrane. Its function is as follows. Component of the zona pellucida, an extracellular matrix surrounding oocytes which mediates sperm binding, induction of the acrosome reaction and prevents post-fertilization polyspermy. The zona pellucida is composed of 3 to 4 glycoproteins, ZP1, ZP2, ZP3, and ZP4. ZP3 is essential for sperm binding and zona matrix formation. The chain is Zona pellucida sperm-binding protein 3 (Zp3) from Rattus norvegicus (Rat).